The sequence spans 289 residues: tRNA pseudouridine synthase B (289 aa).

The active-site Nucleophile is the Asp-38.

The protein belongs to the pseudouridine synthase TruB family. Type 1 subfamily.

The enzyme catalyses uridine(55) in tRNA = pseudouridine(55) in tRNA. Responsible for synthesis of pseudouridine from uracil-55 in the psi GC loop of transfer RNAs. This is tRNA pseudouridine synthase B from Acaryochloris marina (strain MBIC 11017).